The sequence spans 282 residues: NADPH-dependent 7-cyano-7-deazaguanine reductase (282 aa).

88–90 provides a ligand contact to substrate; that stretch reads IES. Residue 90-91 participates in NADPH binding; it reads SK. Cys190 (thioimide intermediate) is an active-site residue. The active-site Proton donor is Asp197. 229 to 230 lines the substrate pocket; it reads HE. Residue 258–259 coordinates NADPH; it reads RG.

The protein belongs to the GTP cyclohydrolase I family. QueF type 2 subfamily. In terms of assembly, homodimer.

It localises to the cytoplasm. It catalyses the reaction 7-aminomethyl-7-carbaguanine + 2 NADP(+) = 7-cyano-7-deazaguanine + 2 NADPH + 3 H(+). It functions in the pathway tRNA modification; tRNA-queuosine biosynthesis. Its function is as follows. Catalyzes the NADPH-dependent reduction of 7-cyano-7-deazaguanine (preQ0) to 7-aminomethyl-7-deazaguanine (preQ1). The polypeptide is NADPH-dependent 7-cyano-7-deazaguanine reductase (Pectobacterium carotovorum subsp. carotovorum (strain PC1)).